The sequence spans 815 residues: Minichromosome loss protein 1 (815 aa).

WD repeat units follow at residues 11–50 (AHTD…EPDS), 53–90 (NHQD…EHTL), 93–132 (RTTL…QIFS), 135–174 (PAKA…LIKF), and 228–267 (ENHS…VVVE). Positions 306-362 (LKEENDPTKPLTSSKSKNRTSKELDDLFGSDDEQSQNVNDLDGNSANEENEFINHDG) are disordered. Residues 340–352 (SQNVNDLDGNSAN) are compositionally biased toward polar residues. Residues 517 to 553 (ENESPVTISLSSSVVLVCTSAGYVRVFSRQGFPISIH) form a WD 6 repeat.

As to quaternary structure, interacts with pof3 and pol1.

The protein resides in the nucleus. It localises to the chromosome. In terms of biological role, has a role in regulating DNA replication complexes. Acts as a regulator of post DNA replication initiation. Associates with chromatin during G1 and S phases of mitosis. Required for the transcriptional repression of the outer repeats of the centromeric region. Acts as a polymerase alpha replication accessory factor and is important for S-phase DNA damage survival. Plays a role in lagging-strand synthesis and Ozaki fragment processing, in addition to DNA repair. The protein is Minichromosome loss protein 1 (mcl1) of Schizosaccharomyces pombe (strain 972 / ATCC 24843) (Fission yeast).